Consider the following 155-residue polypeptide: uncharacterized protein (155 aa).

The interval 1-34 (MESLQTPQHRENQDKREKEYGVKHMPMGNNAGNL) is disordered. A compositionally biased stretch (basic and acidic residues) spans 8–22 (QHRENQDKREKEYGV). A helical membrane pass occupies residues 115–135 (MSLLLLPAFSGLTWAPFLFLF).

Its subcellular location is the membrane. This is an uncharacterized protein from Homo sapiens (Human).